Reading from the N-terminus, the 1078-residue chain is A type blood alpha-D-galactosamine galactosaminidase (1078 aa).

An N-terminal signal peptide occupies residues 1-26 (MRGKKFISLTLSTMLCLQLLPTASFA). Positions 306–570 (PDSSYDLRWE…NNIWYPSAVG (265 aa)) are glycoside hydrolase 36 domain. The active-site Nucleophile is the D463. D532 is an active-site residue. Residues 699–1078 (PDPEPVDPDY…LDYLTYTTNA (380 aa)) form a not required for activity on soluble substrates region.

The protein belongs to the glycosyl hydrolase 36 family.

The catalysed reaction is an alpha-D-galactosaminyl-(1-&gt;3)-[alpha-L-fucosyl-(1-&gt;2)]-beta-D-galactosyl derivative + H2O = D-galactosamine + an alpha-L-fucosyl-(1-&gt;2)-beta-D-galactosyl derivative. In terms of biological role, one of an enzyme pair that work together to convert the A antigen to the H antigen of the O blood type, which together release galactosamine. Catalyzes the second step in the conversion, acts on the product of the first reaction (FpGalNAcDeAc, AC P0DTR4). Is specific for galactosamine containing sugars, does not cleave GalNAc residues. The chain is A type blood alpha-D-galactosamine galactosaminidase from Flavonifractor plautii (Fusobacterium plautii).